A 271-amino-acid polypeptide reads, in one-letter code: 3-methyl-2-oxobutanoate hydroxymethyltransferase (271 aa).

Residues Asp-51 and Asp-90 each contribute to the Mg(2+) site. 3-methyl-2-oxobutanoate is bound by residues 51–52 (DS), Asp-90, and Lys-118. Glu-120 provides a ligand contact to Mg(2+). Glu-186 (proton acceptor) is an active-site residue.

This sequence belongs to the PanB family. In terms of assembly, homodecamer; pentamer of dimers. Mg(2+) serves as cofactor.

The protein resides in the cytoplasm. It carries out the reaction 3-methyl-2-oxobutanoate + (6R)-5,10-methylene-5,6,7,8-tetrahydrofolate + H2O = 2-dehydropantoate + (6S)-5,6,7,8-tetrahydrofolate. It functions in the pathway cofactor biosynthesis; (R)-pantothenate biosynthesis; (R)-pantoate from 3-methyl-2-oxobutanoate: step 1/2. Catalyzes the reversible reaction in which hydroxymethyl group from 5,10-methylenetetrahydrofolate is transferred onto alpha-ketoisovalerate to form ketopantoate. The chain is 3-methyl-2-oxobutanoate hydroxymethyltransferase from Xanthomonas campestris pv. campestris (strain B100).